We begin with the raw amino-acid sequence, 406 residues long: uncharacterized protein (406 aa).

Polar residues predominate over residues 136-153 (SQKNWGSEKNWNSPSQGP). Positions 136-157 (SQKNWGSEKNWNSPSQGPASRE) are disordered.

This is an uncharacterized protein from Rattus norvegicus (Rat).